A 172-amino-acid polypeptide reads, in one-letter code: Methylated-DNA--protein-cysteine methyltransferase (172 aa).

Catalysis depends on cysteine 142, which acts as the Nucleophile; methyl group acceptor.

Belongs to the MGMT family.

It is found in the cytoplasm. The enzyme catalyses a 6-O-methyl-2'-deoxyguanosine in DNA + L-cysteinyl-[protein] = S-methyl-L-cysteinyl-[protein] + a 2'-deoxyguanosine in DNA. The catalysed reaction is a 4-O-methyl-thymidine in DNA + L-cysteinyl-[protein] = a thymidine in DNA + S-methyl-L-cysteinyl-[protein]. Involved in the cellular defense against the biological effects of O6-methylguanine (O6-MeG) and O4-methylthymine (O4-MeT) in DNA. Repairs the methylated nucleobase in DNA by stoichiometrically transferring the methyl group to a cysteine residue in the enzyme. This is a suicide reaction: the enzyme is irreversibly inactivated. The protein is Methylated-DNA--protein-cysteine methyltransferase of Pyrococcus abyssi (strain GE5 / Orsay).